Reading from the N-terminus, the 1102-residue chain is Putative helicase/primase complex protein (1102 aa).

Disordered stretches follow at residues 1031–1057 (TKEE…EETC) and 1082–1102 (EETC…FTET).

Belongs to the asfivirus F1055L family.

Its function is as follows. May be involved in DNA replication. This is Putative helicase/primase complex protein from African swine fever virus (isolate Tick/Malawi/Lil 20-1/1983) (ASFV).